The primary structure comprises 727 residues: Epithelial splicing regulatory protein 2 (727 aa).

Residues 1–22 form a disordered region; it reads MTPPPPPPPPPGPDPAADPAAD. The residue at position 83 (Ser83) is a Phosphoserine. RRM domains are found at residues 257–353, 358–438, and 475–555; these read TVVR…RFLS, VILR…RSTA, and DCVR…PCST. Position 573 is a phosphoserine (Ser573).

It belongs to the ESRP family. Interacts with RBPMS. In terms of tissue distribution, epithelial cell-specific.

It is found in the nucleus. In terms of biological role, mRNA splicing factor that regulates the formation of epithelial cell-specific isoforms. Specifically regulates the expression of FGFR2-IIIb, an epithelial cell-specific isoform of FGFR2. Also regulates the splicing of CD44, CTNND1, ENAH, 3 transcripts that undergo changes in splicing during the epithelial-to-mesenchymal transition (EMT). Acts by directly binding specific sequences in mRNAs. Binds the GU-rich sequence motifs in the ISE/ISS-3, a cis-element regulatory region present in the mRNA of FGFR2. The chain is Epithelial splicing regulatory protein 2 (ESRP2) from Homo sapiens (Human).